The following is a 569-amino-acid chain: Cytosolic purine 5'-nucleotidase (569 aa).

Residue D52 is the Nucleophile of the active site. Positions 52 and 54 each coordinate IMP. Residues D52 and D54 each contribute to the Mg(2+) site. Catalysis depends on D54, which acts as the Proton donor. Residues R144 and N154 each coordinate ATP. IMP-binding residues include R202, D206, K215, T249, N250, S251, and K292. D351 is a Mg(2+) binding site. The ATP site is built by Q453 and R456. Residues 527–569 (SISEIKPPNLFPQAPQEITHCHDEDDDEEEEEEEVEEEEEEEE) form a disordered region. Residues 548–569 (HDEDDDEEEEEEEVEEEEEEEE) form a required for tetramer assembly region. Residues 550 to 569 (EDDDEEEEEEEVEEEEEEEE) show a composition bias toward acidic residues.

It belongs to the 5'(3')-deoxyribonucleotidase family. Homotetramer. The cofactor is Mg(2+).

It localises to the cytoplasm. Its subcellular location is the cytosol. It catalyses the reaction a ribonucleoside 5'-phosphate + H2O = a ribonucleoside + phosphate. The enzyme catalyses a 2'-deoxyribonucleoside + a ribonucleoside 5'-phosphate = a ribonucleoside + a 2'-deoxyribonucleoside 5'-phosphate. The catalysed reaction is IMP + H2O = inosine + phosphate. It carries out the reaction GMP + H2O = guanosine + phosphate. It catalyses the reaction dGMP + H2O = 2'-deoxyguanosine + phosphate. The enzyme catalyses dIMP + H2O = 2'-deoxyinosine + phosphate. The catalysed reaction is XMP + H2O = xanthosine + phosphate. It carries out the reaction inosine + GMP = guanosine + IMP. It catalyses the reaction dGMP + inosine = 2'-deoxyguanosine + IMP. The enzyme catalyses dIMP + inosine = 2'-deoxyinosine + IMP. The catalysed reaction is inosine + UMP = uridine + IMP. It carries out the reaction inosine + CMP = cytidine + IMP. It catalyses the reaction inosine + AMP = IMP + adenosine. Its activity is regulated as follows. Allosterically activated by various compounds including ATP, 2,3-BPG/2,3-Bisphosphoglyceric acid and Ap4A/P1,P4-bis(5'-adenosyl) tetraphosphate. Binding of an allosteric activator is a prerequisiste to magnesium and substrate binding. Inhibited by inorganic phosphate. Inhibited by inosine, guanosine, p-chloromercuribenzoate and NaF. Broad specificity cytosolic 5'-nucleotidase that catalyzes the dephosphorylation of 6-hydroxypurine nucleoside 5'-monophosphates. In addition, possesses a phosphotransferase activity by which it can transfer a phosphate from a donor nucleoside monophosphate to an acceptor nucleoside, preferably inosine, deoxyinosine and guanosine. Has the highest activities for IMP and GMP followed by dIMP, dGMP and XMP. Could also catalyze the transfer of phosphates from pyrimidine monophosphates but with lower efficiency. Through these activities regulates the purine nucleoside/nucleotide pools within the cell. The polypeptide is Cytosolic purine 5'-nucleotidase (NT5C2) (Gallus gallus (Chicken)).